A 138-amino-acid polypeptide reads, in one-letter code: Large ribosomal subunit protein uL16 (138 aa).

The segment covering 1-16 (MLIPRRVKHRKQHHPG) has biased composition (basic residues). The interval 1-25 (MLIPRRVKHRKQHHPGRSGQATGGT) is disordered.

Belongs to the universal ribosomal protein uL16 family. In terms of assembly, part of the 50S ribosomal subunit.

Its function is as follows. Binds 23S rRNA and is also seen to make contacts with the A and possibly P site tRNAs. The protein is Large ribosomal subunit protein uL16 of Renibacterium salmoninarum (strain ATCC 33209 / DSM 20767 / JCM 11484 / NBRC 15589 / NCIMB 2235).